The primary structure comprises 136 residues: Large ribosomal subunit protein uL16 (136 aa).

This sequence belongs to the universal ribosomal protein uL16 family. Part of the 50S ribosomal subunit.

In terms of biological role, binds 23S rRNA and is also seen to make contacts with the A and possibly P site tRNAs. The chain is Large ribosomal subunit protein uL16 from Actinobacillus pleuropneumoniae serotype 5b (strain L20).